A 295-amino-acid chain; its full sequence is MSPSAANTPSYDDFALALEAQSLDSQKGQLVRGKVCEYSTDGAYIDIGGKAPAFLPKREAALHAVLDLEAHLPKDEELEFLVIRDQNEDGQVTVSLRALALEQAWTRVAELQEGGQTVQVKVTGSNKGGVTADLEGLRAFIPRSHLNEKEDLDSLKGKTLTVAFLEVNRADKKLVLSERQAARTALVREIEVGQLINGKVTGLKPFGVFVDLGGATALLPINQISQKFVADVGAIFKIGDPIQALVVAIDNTKGRISLSTKVLENHPGEILENVAELQASAADRAERARKQLESQ.

S1 motif domains lie at 28–97 (GQLV…VSLR), 115–179 (GQTV…LSER), and 193–261 (GQLI…LSTK).

It belongs to the bacterial ribosomal protein bS1 family.

In terms of biological role, binds mRNA. In Synechococcus elongatus (strain ATCC 33912 / PCC 7942 / FACHB-805) (Anacystis nidulans R2), this protein is Small ribosomal subunit protein bS1 (rpsA).